The primary structure comprises 467 residues: Chromosomal replication initiator protein DnaA (467 aa).

The tract at residues 1–90 (MSLSLWQQCL…KPVTQTPQAA (90 aa)) is domain I, interacts with DnaA modulators. The interval 91–130 (VTSNVAAPALVAQTQPQRAAPSTRSGWDNVPAPAEPTYRS) is domain II. Residues 131 to 347 (NVNVKHTFDN…GALNRVIANA (217 aa)) form a domain III, AAA+ region region. ATP-binding residues include Gly-175, Gly-177, Lys-178, and Thr-179. A domain IV, binds dsDNA region spans residues 348–467 (NFTGRAITID…FSNLIRTLSS (120 aa)).

Belongs to the DnaA family. As to quaternary structure, oligomerizes as a right-handed, spiral filament on DNA at oriC.

It is found in the cytoplasm. Functionally, plays an essential role in the initiation and regulation of chromosomal replication. ATP-DnaA binds to the origin of replication (oriC) to initiate formation of the DNA replication initiation complex once per cell cycle. Binds the DnaA box (a 9 base pair repeat at the origin) and separates the double-stranded (ds)DNA. Forms a right-handed helical filament on oriC DNA; dsDNA binds to the exterior of the filament while single-stranded (ss)DNA is stabiized in the filament's interior. The ATP-DnaA-oriC complex binds and stabilizes one strand of the AT-rich DNA unwinding element (DUE), permitting loading of DNA polymerase. After initiation quickly degrades to an ADP-DnaA complex that is not apt for DNA replication. Binds acidic phospholipids. The polypeptide is Chromosomal replication initiator protein DnaA (Shigella dysenteriae serotype 1 (strain Sd197)).